Reading from the N-terminus, the 35-residue chain is Beta-theraphotoxin-Hlv1a (35 aa).

Disulfide bonds link Cys2–Cys17, Cys9–Cys24, and Cys16–Cys31.

The protein belongs to the neurotoxin 10 (Hwtx-1) family. 10 (haplotoxin-1) subfamily. Expressed by the venom gland.

The protein resides in the secreted. Its function is as follows. Spider venom neurotoxin that blocks voltage-gated sodium channel Nav1.3/SCN3A in human (IC(50)=1 uM) and rat (IC(50)=1 uM). This is Beta-theraphotoxin-Hlv1a from Cyriopagopus lividus (Cobalt blue tarantula).